We begin with the raw amino-acid sequence, 213 residues long: Thiopurine S-methyltransferase (213 aa).

S-adenosyl-L-methionine contacts are provided by tryptophan 10, leucine 45, glutamate 66, and arginine 121.

This sequence belongs to the class I-like SAM-binding methyltransferase superfamily. TPMT family.

It localises to the cytoplasm. It catalyses the reaction S-adenosyl-L-methionine + a thiopurine = S-adenosyl-L-homocysteine + a thiopurine S-methylether.. The protein is Thiopurine S-methyltransferase of Aliivibrio fischeri (strain MJ11) (Vibrio fischeri).